The following is a 78-amino-acid chain: Acyl carrier protein (78 aa).

One can recognise a Carrier domain in the interval 2–77 (SDTEERVKKI…DAVKFIDKAS (76 aa)). S37 is modified (O-(pantetheine 4'-phosphoryl)serine).

This sequence belongs to the acyl carrier protein (ACP) family. Post-translationally, 4'-phosphopantetheine is transferred from CoA to a specific serine of apo-ACP by AcpS. This modification is essential for activity because fatty acids are bound in thioester linkage to the sulfhydryl of the prosthetic group.

It localises to the cytoplasm. It functions in the pathway lipid metabolism; fatty acid biosynthesis. Carrier of the growing fatty acid chain in fatty acid biosynthesis. The chain is Acyl carrier protein from Bartonella bacilliformis (strain ATCC 35685 / KC583 / Herrer 020/F12,63).